Here is a 340-residue protein sequence, read N- to C-terminus: Entry-fusion complex protein OPG094 (340 aa).

Positions 1-20 (MGGGVSVELPKRDPPPGVPT) are disordered. Gly2 carries N-myristoyl glycine; by host lipidation. The Virion surface portion of the chain corresponds to 2-319 (GGGVSVELPK…VQHNIKHSFD (318 aa)). The chain crosses the membrane as a helical; Signal-anchor for type II membrane protein span at residues 320 to 340 (LKLHLISLLSLLVIWILIVAI).

The protein belongs to the orthopoxvirus OPG086 family. As to quaternary structure, interacts with OPG143. Component of the entry fusion complex (EFC) composed of OPG053, OPG076, OPG086, OPG094, OPG095, OPG099, OPG107, OPG143, OPG104, OPG147 and OPG155. Except for OPG095 and OPG053, each of the EFC proteins is required for assembly or stability of the complex. Unglycosylated because produced in viral factories instead of the classic ER -Golgi route.

The protein resides in the virion membrane. Component of the entry fusion complex (EFC), which consists of 11 proteins. During cell infection, this complex mediates entry of the virion core into the host cytoplasm by a two-step mechanism consisting of lipid mixing of the viral and cellular membranes and subsequent pore formation. The sequence is that of Entry-fusion complex protein OPG094 (OPG094) from Cynomys gunnisoni (Gunnison's prairie dog).